Reading from the N-terminus, the 206-residue chain is Riboflavin transporter RibU (206 aa).

6 consecutive transmembrane segments (helical) span residues 7–27 (MVLI…ILQF), 42–62 (IIPV…IILF), 79–99 (WIGV…VWFF), 113–133 (IVLA…FYAL), 147–169 (IFAG…PTYL), and 173–195 (VLPF…VTVF).

Belongs to the prokaryotic riboflavin transporter (P-RFT) (TC 2.A.87) family. As to quaternary structure, in E.coli forms a stable energy-coupling factor (ECF) transporter complex composed of 2 membrane-embedded substrate-binding protein (S component), 2 ATP-binding proteins (A and A' components) and 2 transmembrane proteins (T component), probably with a stoichiometry of 2:1:1:2. May be able to interact with more than 1 S component at a time.

The protein localises to the cell membrane. Functionally, mediates riboflavin uptake, may also transport FMN and roseoflavin. Probably a riboflavin-binding protein that interacts with the energy-coupling factor (ECF) ABC-transporter complex. Unlike classic ABC transporters this ECF transporter provides the energy necessary to transport a number of different substrates. The substrates themselves are bound by transmembrane, not extracytoplasmic soluble proteins. Uptake of riboflavin into proteosomes containing EcfA1A2T and RibU has been demonstrated. Uptake requires hydrolyzable Mg-ATP. The polypeptide is Riboflavin transporter RibU (ribU) (Lactococcus lactis subsp. cremoris (strain MG1363)).